Consider the following 265-residue polypeptide: Small ribosomal subunit protein uS3 (265 aa).

The 69-residue stretch at 39–107 (VRDFLKKKLK…PVHVNIEEIR (69 aa)) folds into the KH type-2 domain. The tract at residues 211 to 265 (NDAPVVEEPQDDRRRRPGRPEGRRREGEGRPGGNRRGGAGAGRRAAPGADAKSGE) is disordered. The span at 221-239 (DDRRRRPGRPEGRRREGEG) shows a compositional bias: basic and acidic residues. Gly residues predominate over residues 240–251 (RPGGNRRGGAGA).

This sequence belongs to the universal ribosomal protein uS3 family. As to quaternary structure, part of the 30S ribosomal subunit. Forms a tight complex with proteins S10 and S14.

In terms of biological role, binds the lower part of the 30S subunit head. Binds mRNA in the 70S ribosome, positioning it for translation. The polypeptide is Small ribosomal subunit protein uS3 (Cupriavidus necator (strain ATCC 17699 / DSM 428 / KCTC 22496 / NCIMB 10442 / H16 / Stanier 337) (Ralstonia eutropha)).